A 217-amino-acid chain; its full sequence is uncharacterized protein (217 aa).

6 helical membrane passes run 13–35 (IWLTSTLLAMKYLTPLNLAIALL), 50–68 (FSLVFPILLSALAAYILYL), 75–94 (FLLAYSILFIALKFVNEWRI), 109–131 (MMALAYGAGLMEILAPLTLLFSL), 152–174 (YLAIIPLALIFYILSHPVLAAAV), and 194–216 (GFSLLFLNLLFVVGFLALDFAGL).

Its subcellular location is the cell membrane. This is an uncharacterized protein from Archaeoglobus fulgidus (strain ATCC 49558 / DSM 4304 / JCM 9628 / NBRC 100126 / VC-16).